Consider the following 164-residue polypeptide: Pheromone-binding protein 2 (164 aa).

The first 22 residues, Met-1–Ala-22, serve as a signal peptide directing secretion. 3 disulfides stabilise this stretch: Cys-41/Cys-76, Cys-72/Cys-130, and Cys-119/Cys-139.

Belongs to the PBP/GOBP family. In terms of tissue distribution, antenna.

Its function is as follows. This major soluble protein in olfactory sensilla of male moths might serve to solubilize the extremely hydrophobic pheromone molecules and to transport pheromone through the aqueous lymph to receptors located on olfactory cilia. This chain is Pheromone-binding protein 2, found in Antheraea pernyi (Chinese oak silk moth).